The following is a 174-amino-acid chain: Peptide deformylase (174 aa).

Fe cation-binding residues include Cys96 and His138. Glu139 is a catalytic residue. Residue His142 coordinates Fe cation.

Belongs to the polypeptide deformylase family. Fe(2+) serves as cofactor.

The enzyme catalyses N-terminal N-formyl-L-methionyl-[peptide] + H2O = N-terminal L-methionyl-[peptide] + formate. Removes the formyl group from the N-terminal Met of newly synthesized proteins. Requires at least a dipeptide for an efficient rate of reaction. N-terminal L-methionine is a prerequisite for activity but the enzyme has broad specificity at other positions. This chain is Peptide deformylase, found in Nautilia profundicola (strain ATCC BAA-1463 / DSM 18972 / AmH).